Consider the following 1233-residue polypeptide: Integrator complex subunit 4 homolog (1233 aa).

2 HEAT repeats span residues serine 236–lysine 273 and serine 275–serine 310. The interval arginine 426 to proline 473 is disordered. The segment covering glutamine 428 to glutamine 462 has biased composition (low complexity). HEAT repeat units follow at residues isoleucine 487–glutamate 524, phenylalanine 525–isoleucine 561, and glutamate 563–serine 597. Low complexity predominate over residues asparagine 767 to asparagine 792. 2 disordered regions span residues asparagine 767–aspartate 796 and aspartate 993–threonine 1057. Acidic residues predominate over residues glutamate 1000–asparagine 1013. The segment covering glutamate 1014–asparagine 1030 has biased composition (basic and acidic residues). Residues lysine 1046 to threonine 1057 are compositionally biased toward low complexity.

Belongs to the Integrator subunit 4 family. As to quaternary structure, component of the Integrator complex. The core complex associates with protein phosphatase 2A subunits, to form the Integrator-PP2A (INTAC) complex.

It localises to the nucleus. The protein resides in the cytoplasm. In terms of biological role, component of the integrator complex, a multiprotein complex that terminates RNA polymerase II (Pol II) transcription in the promoter-proximal region of genes. The integrator complex provides a quality checkpoint during transcription elongation by driving premature transcription termination of transcripts that are unfavorably configured for transcriptional elongation: the complex terminates transcription by (1) catalyzing dephosphorylation of the C-terminal domain (CTD) of Pol II subunit polr2a, (2) degrading the exiting nascent RNA transcript via endonuclease activity and (3) promoting the release of Pol II from bound DNA. The integrator complex is also involved in terminating the synthesis of non-coding Pol II transcripts, such as enhancer RNAs (eRNAs), small nuclear RNAs (snRNAs), telomerase RNAs and long non-coding RNAs (lncRNAs). This chain is Integrator complex subunit 4 homolog (ints4), found in Dictyostelium discoideum (Social amoeba).